Consider the following 622-residue polypeptide: Iron transport multicopper oxidase fetC (622 aa).

The N-terminal stretch at 1–20 (MARLVHLTAVLAASIRLAAA) is a signal peptide. The Extracellular portion of the chain corresponds to 21-552 (ATINHDFNVT…DPLPAGFTTR (532 aa)). N-linked (GlcNAc...) asparagine glycans are attached at residues asparagine 28 and asparagine 74. Plastocyanin-like domains are found at residues 29–144 (VTWV…VHDP) and 154–301 (EEIV…SYDK). Positions 80 and 82 each coordinate Cu cation. Residues asparagine 87 and asparagine 112 are each glycosylated (N-linked (GlcNAc...) asparagine). 2 residues coordinate Cu cation: histidine 124 and histidine 126. Residues asparagine 194, asparagine 198, asparagine 265, asparagine 292, and asparagine 358 are each glycosylated (N-linked (GlcNAc...) asparagine). Residues 362-497 (KSPKVPTLYS…GLVATFVEAP (136 aa)) form the Plastocyanin-like 3 domain. Histidine 412, histidine 415, and histidine 417 together coordinate Cu cation. N-linked (GlcNAc...) asparagine glycosylation is present at asparagine 428. Residues histidine 478, cysteine 479, histidine 480, and histidine 484 each contribute to the Cu cation site. Residues 553-573 (GIVALVFSCVTGILGICVVAW) form a helical membrane-spanning segment. At 574 to 622 (YGMSQPLEEATAAVATLVREAQVTGSGTSPNHDDGNAAATEAGVLRRRT) the chain is on the cytoplasmic side. The segment at 597–622 (TGSGTSPNHDDGNAAATEAGVLRRRT) is disordered.

The protein belongs to the multicopper oxidase family.

The protein localises to the cell membrane. Its function is as follows. Cell surface ferroxidase; part of the reductive iron assimilatory system (RIA), a siderophore-independent high affinity iron uptake mechanism. Required to oxidize Fe(2+) and release it from the transporter. The protein is Iron transport multicopper oxidase fetC of Epichloe festucae (strain E2368).